The following is a 295-amino-acid chain: RNA polymerase sigma factor RpoH (295 aa).

The segment at 52-121 is sigma-70 factor domain-2; it reads MVTSHLRLVA…IQEYILRSWS (70 aa). Residues 76 to 79 carry the Interaction with polymerase core subunit RpoC motif; that stretch reads EVIS. The segment at 230-281 is sigma-70 factor domain-4; the sequence is AMVELTDRERHILTERRLKDDPTTLEELAAQYGVSRERVRQIEVRAFEKLQK. The H-T-H motif DNA-binding region spans 254 to 273; that stretch reads LEELAAQYGVSRERVRQIEV.

Belongs to the sigma-70 factor family. RpoH subfamily. In terms of assembly, interacts with the RNA polymerase core enzyme.

The protein resides in the cytoplasm. Its function is as follows. Sigma factors are initiation factors that promote the attachment of RNA polymerase to specific initiation sites and are then released. This sigma factor is involved in regulation of expression of heat shock genes. In Caulobacter vibrioides (strain ATCC 19089 / CIP 103742 / CB 15) (Caulobacter crescentus), this protein is RNA polymerase sigma factor RpoH.